Here is a 540-residue protein sequence, read N- to C-terminus: Acrosin-binding protein (540 aa).

The N-terminal stretch at 1-24 (MKLAASFLLMLLEVLLLPETPLSA) is a signal peptide. Residues 25–104 (EEALASTPGS…ASWFESFCQF (80 aa)) are pro-ACR binding. A propeptide spans 25-272 (EEALASTPGS…NPSFFTPRVR (248 aa)) (removed in mature form). A disordered region spans residues 181–266 (SLSLGGKEQQ…SKSLSSNPSF (86 aa)). Over residues 195–213 (LGLEQQHKQEQIQEHKLEE) the composition is skewed to basic and acidic residues. Residues 214-241 (AQEQEEQEEEEEEEEAKQEEGQGTEEGL) show a composition bias toward acidic residues. The span at 256–266 (QSKSLSSNPSF) shows a compositional bias: polar residues. The interval 316–424 (LPHTETLMVL…NQAKIPEKGR (109 aa)) is pro-ACR binding.

Binds pro-ACR. Does not bind the mature form of ACR. As to quaternary structure, binds pro-ACR. Does not bind mature form of ACR. The N-terminus is blocked. Post-translationally, phosphorylated on Tyr residues in capacitated sperm. In terms of processing, synthesized as a 60-kDa precursor, the 32-kDa mature form is post-translationally produced by the removal of the N-terminal half of the precursor during sperm maturation in the testis and/or epididymis.

The protein resides in the cytoplasmic vesicle. The protein localises to the secretory vesicle. It localises to the acrosome. Its function is as follows. Acrosomal protein that maintains proacrosin (pro-ACR) as an enzymatically inactive zymogen in the acrosome. Involved also in the acrosome formation. In terms of biological role, maintains pro-ACR as an enzymatically inactive zymogen in the acrosome until acrosomal exocytosis. Partially also contributes to the assembly of acrosomal proteins to form an acrosomal granule. Functionally, rodent specific isoform that participates in the formation of the acrosomal granule into the center of the acrosomal vesicle during early spermiogenesis. In the fertilization process promotes ACR release from the acrosome during acrosomal exocytosis. This is Acrosin-binding protein from Rattus norvegicus (Rat).